The following is a 442-amino-acid chain: MKKIPSIGVVSLGCPKATVDSERILTQLRAEGYLLVGDYANADVVVVNTCGFIDAAVEESLEAIGEALDENGKVVVTGCLGAREGGDFVRGAHPKVLAVTGPNQAGAVLDAIHAALPPAHDPYTDLVPPQGLRLTPPHYAYLKISEGCNQSCSFCIIPSMRGKLVSRAPDDILREAEALVAGGAKELLVISQDTGAYGVDRKYRTAFHNGRPLKTRITDLCAALGELGVWVRLHYVYPYPHIDELLPLMAEGKILPYLDVPLQHGSPRILKAMRRPAAAEKTLDRILGWRQAVPDLIIRSTFIVGFPGETDADFAELLDFLRAAELDRVGCFAYSAVEGAPANAIAGAVPEPVKEERRAAFMAVQEAISRQRLQRRVGQRQRVLVDAMARGGRVIARSASDAPEIDGVVHLGKAAGLQVGDWVEVAITRADAHDLYGMVVSA.

The region spanning 5–117 is the MTTase N-terminal domain; it reads PSIGVVSLGC…VLDAIHAALP (113 aa). Positions 14, 50, 79, 148, 152, and 155 each coordinate [4Fe-4S] cluster. The Radical SAM core domain maps to 134-371; that stretch reads LTPPHYAYLK…MAVQEAISRQ (238 aa). A TRAM domain is found at 374-441; sequence QRRVGQRQRV…AHDLYGMVVS (68 aa).

Belongs to the methylthiotransferase family. RimO subfamily. [4Fe-4S] cluster serves as cofactor.

Its subcellular location is the cytoplasm. The catalysed reaction is L-aspartate(89)-[ribosomal protein uS12]-hydrogen + (sulfur carrier)-SH + AH2 + 2 S-adenosyl-L-methionine = 3-methylsulfanyl-L-aspartate(89)-[ribosomal protein uS12]-hydrogen + (sulfur carrier)-H + 5'-deoxyadenosine + L-methionine + A + S-adenosyl-L-homocysteine + 2 H(+). Catalyzes the methylthiolation of an aspartic acid residue of ribosomal protein uS12. In Acidithiobacillus ferrooxidans (strain ATCC 53993 / BNL-5-31) (Leptospirillum ferrooxidans (ATCC 53993)), this protein is Ribosomal protein uS12 methylthiotransferase RimO.